The primary structure comprises 484 residues: MSMAASSSTATVQPSGIITQPPPPSTLREQRIATHSHIKGLGLADDGTAMSSSQGFIGQILAREALGLHLSLLKGGKYSGRPLLLVGPPGTGKTALALALSQELGSKVPFCAMVGSEVYSGEVKKTEVLGSCFRRAIGLRIKETKEVYEGEVTELTPSEAENPLSGYGKTISHVIVGLKTVKGTKQLRLDPSVYESIQKERVVVGDVIYIEANTGAVKRVGRSDAYASEYDLEAEEYVPLPKGDVHKRKELVQDVTLHDLDMANARPQGGQDIMSVMGQLVKGGRTEVTDKLRREINKVVDRYIEQGVAELVPGVLFIDEVHMLDMECFTYLNRALESPMSPYVVLASNRGISTIRGTEYDGVAGSASEGIRAPHGLPVDLLDRCMIVKTQLYTRDEIRRIVEMRCKVEGIAISSEAVDKLADEGERSSLRYALQLLTPAGIVSKNKGKGEVGVADVEELGELFLDAKRSAGVLRSTEDFEKRY.

Residues 1–11 (MSMAASSSTAT) show a composition bias toward low complexity. The disordered stretch occupies residues 1–27 (MSMAASSSTATVQPSGIITQPPPPSTL). Residue 87–94 (GPPGTGKT) coordinates ATP.

Belongs to the RuvB family. May form heterododecamers with RVB2. Component of the SWR1 chromatin remodeling complex, the INO80 chromatin remodeling complex, and of the R2TP complex.

The protein localises to the nucleus. It catalyses the reaction ATP + H2O = ADP + phosphate + H(+). DNA helicase which participates in several chromatin remodeling complexes, including the SWR1 and the INO80 complexes. The SWR1 complex mediates the ATP-dependent exchange of histone H2A for the H2A variant HZT1 leading to transcriptional regulation of selected genes by chromatin remodeling. The INO80 complex remodels chromatin by shifting nucleosomes and is involved in DNA repair. Also involved in pre-rRNA processing. The polypeptide is RuvB-like helicase 1 (RVB1) (Cryptococcus neoformans var. neoformans serotype D (strain B-3501A) (Filobasidiella neoformans)).